Here is a 932-residue protein sequence, read N- to C-terminus: Isoleucine--tRNA ligase (932 aa).

The 'HIGH' region motif lies at 57 to 67 (PYANGDIHIGT). E559 is a binding site for L-isoleucyl-5'-AMP. Positions 600 to 604 (KMSKS) match the 'KMSKS' region motif. ATP is bound at residue K603. Residues C899, C902, C919, and C922 each coordinate Zn(2+).

The protein belongs to the class-I aminoacyl-tRNA synthetase family. IleS type 1 subfamily. In terms of assembly, monomer. Zn(2+) is required as a cofactor.

Its subcellular location is the cytoplasm. It carries out the reaction tRNA(Ile) + L-isoleucine + ATP = L-isoleucyl-tRNA(Ile) + AMP + diphosphate. Its function is as follows. Catalyzes the attachment of isoleucine to tRNA(Ile). As IleRS can inadvertently accommodate and process structurally similar amino acids such as valine, to avoid such errors it has two additional distinct tRNA(Ile)-dependent editing activities. One activity is designated as 'pretransfer' editing and involves the hydrolysis of activated Val-AMP. The other activity is designated 'posttransfer' editing and involves deacylation of mischarged Val-tRNA(Ile). This is Isoleucine--tRNA ligase from Caldanaerobacter subterraneus subsp. tengcongensis (strain DSM 15242 / JCM 11007 / NBRC 100824 / MB4) (Thermoanaerobacter tengcongensis).